The primary structure comprises 991 residues: UPF0182 protein RHA1_ro08670 (991 aa).

7 consecutive transmembrane segments (helical) span residues 16 to 36, 61 to 81, 115 to 135, 170 to 190, 214 to 234, 263 to 283, and 291 to 311; these read VMIM…RLVV, LILF…AVVW, FTVG…QASW, LILA…LGTH, VQLA…YWLD, RLIM…AIAV, and MATA…PALI. A disordered region spans residues 902 to 940; that stretch reads TGAVATAPGGDATTPPPTGGQPPAPPPPGAPPAPPPATS. Low complexity predominate over residues 903 to 914; it reads GAVATAPGGDAT. The segment covering 915–938 has biased composition (pro residues); that stretch reads TPPPTGGQPPAPPPPGAPPAPPPA.

Belongs to the UPF0182 family.

The protein localises to the cell membrane. In Rhodococcus jostii (strain RHA1), this protein is UPF0182 protein RHA1_ro08670.